A 69-amino-acid chain; its full sequence is Omega-oxotoxin-Ol1a (69 aa).

The 68-residue stretch at Asp-1–Lys-68 folds into the Oxytoxin-type inhibitor cystine knot (ICK) domain. 5 disulfides stabilise this stretch: Cys-4-Cys-18, Cys-11-Cys-23, Cys-15-Cys-64, Cys-17-Cys-52, and Cys-25-Cys-50. Residue Asn-69 is modified to Asparagine amide.

Belongs to the spiderine family. Spiderine subfamily. Expressed by the venom gland.

The protein localises to the secreted. Weak blocker of vertebrate P/Q-, N- and L-type voltage-gated calcium channels (Cav1 and Cav2). Is both paralytic and lethal when injected into lepidopteran larvae. Is not toxic to mice. This Oxyopes lineatus (Lynx spider) protein is Omega-oxotoxin-Ol1a.